Here is a 67-residue protein sequence, read N- to C-terminus: Mitotic-spindle organizing protein 1A (67 aa).

Belongs to the MOZART1 family. Part of the gamma-tubulin complex. Interacts with GIP1 and GCP3. Mostly expressed in siliques and flowers, and, to a lower extent, in leaves, roots and seedlings, with highest levels in young tissues, meristematic cells, and the vasculature.

It localises to the cytoplasm. Its subcellular location is the cytoskeleton. It is found in the microtubule organizing center. The protein localises to the spindle. The protein resides in the nucleus. It localises to the phragmoplast. Its subcellular location is the nucleus envelope. Required for gamma-tubulin complex recruitment to the microtubule organizing centers (MTOCs). During mitosis, modulates gamma-tubulin complex localization, spindle stability and chromosomal segregation. Necessary for gametophyte development and embryogenesis. This chain is Mitotic-spindle organizing protein 1A (GIP2), found in Arabidopsis thaliana (Mouse-ear cress).